The primary structure comprises 425 residues: uncharacterized protein (425 aa).

The region spanning 55-181 is the HD domain; it reads RYAHSLGVYE…DLDTDRMDYL (127 aa).

This is an uncharacterized protein from Mycoplasma genitalium (strain ATCC 33530 / DSM 19775 / NCTC 10195 / G37) (Mycoplasmoides genitalium).